A 523-amino-acid chain; its full sequence is 2-isopropylmalate synthase (523 aa).

A Pyruvate carboxyltransferase domain is found at 5–267 (VIIFDTTLRD…HTNINHHEIW (263 aa)). Mn(2+)-binding residues include aspartate 14, histidine 202, histidine 204, and asparagine 238. Residues 392–523 (RLDYFSVQSG…QNKENNKETV (132 aa)) are regulatory domain.

It belongs to the alpha-IPM synthase/homocitrate synthase family. LeuA type 1 subfamily. As to quaternary structure, homodimer. Requires Mn(2+) as cofactor.

It is found in the cytoplasm. The enzyme catalyses 3-methyl-2-oxobutanoate + acetyl-CoA + H2O = (2S)-2-isopropylmalate + CoA + H(+). It participates in amino-acid biosynthesis; L-leucine biosynthesis; L-leucine from 3-methyl-2-oxobutanoate: step 1/4. In terms of biological role, catalyzes the condensation of the acetyl group of acetyl-CoA with 3-methyl-2-oxobutanoate (2-ketoisovalerate) to form 3-carboxy-3-hydroxy-4-methylpentanoate (2-isopropylmalate). The polypeptide is 2-isopropylmalate synthase (Salmonella agona (strain SL483)).